A 162-amino-acid polypeptide reads, in one-letter code: NADH-quinone oxidoreductase subunit I (162 aa).

2 4Fe-4S ferredoxin-type domains span residues 53–83 and 93–122; these read LRRYPNGEERCIACKLCEAVCPALAITIDSA and TRYDIDLFKCIFCGFCEESCPVDSIVETHI. Cys-63, Cys-66, Cys-69, Cys-73, Cys-102, Cys-105, Cys-108, and Cys-112 together coordinate [4Fe-4S] cluster.

Belongs to the complex I 23 kDa subunit family. NDH-1 is composed of 14 different subunits. Subunits NuoA, H, J, K, L, M, N constitute the membrane sector of the complex. Requires [4Fe-4S] cluster as cofactor.

It is found in the cell inner membrane. The catalysed reaction is a quinone + NADH + 5 H(+)(in) = a quinol + NAD(+) + 4 H(+)(out). In terms of biological role, NDH-1 shuttles electrons from NADH, via FMN and iron-sulfur (Fe-S) centers, to quinones in the respiratory chain. The immediate electron acceptor for the enzyme in this species is believed to be ubiquinone. Couples the redox reaction to proton translocation (for every two electrons transferred, four hydrogen ions are translocated across the cytoplasmic membrane), and thus conserves the redox energy in a proton gradient. In Xanthomonas oryzae pv. oryzae (strain MAFF 311018), this protein is NADH-quinone oxidoreductase subunit I.